Reading from the N-terminus, the 108-residue chain is Competence protein ComGC (108 aa).

Residues Met1 to Val13 form the signal peptide. Residues Lys14–Leu39 are may be involved in polymerization of ComGC. The residue at position 16 (Phe16) is an N-methylphenylalanine. Residues Phe16–Val36 traverse the membrane as a helical segment.

Belongs to the ComGC family. As to quaternary structure, the transformation pili are flexible filaments, consisting mainly of the major pilin ComGC and smaller amounts of the minor pilins, including at least ComGD, ComGF and ComGG, and perhaps ComGE. Homodimer. Forms higher-order multimers. Interacts with ComGG; the interaction is probably direct. Post-translationally, undergoes proteolytic cleavage.

It is found in the cell membrane. The protein resides in the cell surface. The protein localises to the fimbrium. Its subcellular location is the secreted. In terms of biological role, major component of the type IV-like pilus (T4P) that plays a role in transformation. Transformation pili are dynamically extended and retracted, perhaps thereby promoting DNA uptake and transformation. Required for transformation. Required for DNA binding. This chain is Competence protein ComGC, found in Streptococcus pneumoniae serotype 4 (strain ATCC BAA-334 / TIGR4).